Consider the following 30-residue polypeptide: Ribosome-inactivating protein momorcochin-S (30 aa).

The protein belongs to the ribosome-inactivating protein family. Type 1 RIP subfamily. Post-translationally, glycosylated.

It catalyses the reaction Endohydrolysis of the N-glycosidic bond at one specific adenosine on the 28S rRNA.. Inactivates eukaryotic 60S ribosomal subunits. The protein is Ribosome-inactivating protein momorcochin-S of Momordica cochinchinensis (Spiny bitter cucumber).